We begin with the raw amino-acid sequence, 87 residues long: U18-myrmicitoxin-Mri1a (87 aa).

The N-terminal stretch at 1 to 32 is a signal peptide; sequence MKNNYNRINTFIVYLMVTFSLISIISITECTP. The EGF-like domain occupies 33 to 77; that stretch reads NHDPCPPQYAEALCLNGGTCFSVTIMGSDNYNCICAPGFRGWRCQ. Cystine bridges form between Cys37-Cys52, Cys46-Cys65, and Cys67-Cys76.

In terms of processing, O-glycosylated. As to expression, expressed by the venom gland.

The protein resides in the secreted. The protein is U18-myrmicitoxin-Mri1a of Manica rubida (European giant red ant).